The following is a 219-amino-acid chain: Orotate phosphoribosyltransferase (219 aa).

Residue K26 coordinates 5-phospho-alpha-D-ribose 1-diphosphate. Residue 34–35 coordinates orotate; sequence FF. Residues 72-73, R98, K99, K102, H104, and 124-132 contribute to the 5-phospho-alpha-D-ribose 1-diphosphate site; these read YK and DDVITAGTA. Residues T128 and R156 each contribute to the orotate site.

Belongs to the purine/pyrimidine phosphoribosyltransferase family. PyrE subfamily. As to quaternary structure, homodimer. The cofactor is Mg(2+).

The enzyme catalyses orotidine 5'-phosphate + diphosphate = orotate + 5-phospho-alpha-D-ribose 1-diphosphate. It participates in pyrimidine metabolism; UMP biosynthesis via de novo pathway; UMP from orotate: step 1/2. Functionally, catalyzes the transfer of a ribosyl phosphate group from 5-phosphoribose 1-diphosphate to orotate, leading to the formation of orotidine monophosphate (OMP). The sequence is that of Orotate phosphoribosyltransferase from Xanthomonas euvesicatoria pv. vesicatoria (strain 85-10) (Xanthomonas campestris pv. vesicatoria).